The chain runs to 434 residues: Chaperone SurA (434 aa).

The first 22 residues, 1 to 22, serve as a signal peptide directing secretion; it reads MKHSKKIVTALLALAMSQTVMA. PpiC domains follow at residues 173–274 and 283–383; these read EVEF…KVMD and VEEV…QLMD.

The protein resides in the periplasm. The catalysed reaction is [protein]-peptidylproline (omega=180) = [protein]-peptidylproline (omega=0). Functionally, chaperone involved in the correct folding and assembly of outer membrane proteins. Recognizes specific patterns of aromatic residues and the orientation of their side chains, which are found more frequently in integral outer membrane proteins. May act in both early periplasmic and late outer membrane-associated steps of protein maturation. The sequence is that of Chaperone SurA from Shewanella denitrificans (strain OS217 / ATCC BAA-1090 / DSM 15013).